A 1489-amino-acid polypeptide reads, in one-letter code: Type-2 histone deacetylase 1 (1489 aa).

Low complexity-rich tracts occupy residues 135 to 163 (NNNN…SPSG), 190 to 259 (SNGN…SRNL), 281 to 306 (NIIN…TSTT), and 325 to 399 (SPTS…NINN). Disordered stretches follow at residues 135–259 (NNNN…SRNL), 281–556 (NIIN…NYQQ), 915–935 (NNNN…DDQL), 955–1024 (NISK…RDRD), and 1151–1185 (STGI…GEQC). Positions 400-430 (VANGTPRPSLQTSRLQGKLPSPQQYNTSPSH) are enriched in polar residues. Composition is skewed to low complexity over residues 431–450 (QQYP…PIQS), 486–553 (NNNN…NNSN), 915–928 (NNNN…NNNN), and 959–988 (NNNN…NNNN). 2 stretches are compositionally biased toward basic and acidic residues: residues 989-1001 (RNRD…ERDN) and 1010-1024 (IEKE…RDRD). Positions 1158–1180 (STSTPITTTGTATVTPGSTTSST) are enriched in low complexity. His1232 functions as the Proton acceptor in the catalytic mechanism. The segment covering 1325-1335 (EQNDYDDDDNN) has biased composition (acidic residues). Positions 1325 to 1374 (EQNDYDDDDNNNDVNNNNNNNNNNNNNNNNNNNNKNNNNNNSNSITQQST) are disordered. Residues 1336–1367 (NDVNNNNNNNNNNNNNNNNNNNNKNNNNNNSN) show a composition bias toward low complexity.

This sequence belongs to the histone deacetylase family. HD type 2 subfamily.

It is found in the nucleus. The protein localises to the cytoplasm. It catalyses the reaction N(6)-acetyl-L-lysyl-[histone] + H2O = L-lysyl-[histone] + acetate. Responsible for the deacetylation of lysine residues on the N-terminal part of the core histones (H2A, H2B, H3 and H4). Histone deacetylation plays an important role in transcriptional regulation, cell cycle progression and developmental events. Histone deacetylases act via the formation of large multiprotein complexes. This chain is Type-2 histone deacetylase 1 (hdaD), found in Dictyostelium discoideum (Social amoeba).